Reading from the N-terminus, the 233-residue chain is Purine nucleoside phosphorylase DeoD-type (233 aa).

His4 contributes to the a purine D-ribonucleoside binding site. Phosphate-binding positions include Gly20, Arg24, Arg43, and Arg87–Thr90. A purine D-ribonucleoside contacts are provided by residues Glu179–Glu181 and Ser203–Asp204. The active-site Proton donor is Asp204.

The protein belongs to the PNP/UDP phosphorylase family. In terms of assembly, homohexamer; trimer of homodimers.

It carries out the reaction a purine D-ribonucleoside + phosphate = a purine nucleobase + alpha-D-ribose 1-phosphate. The enzyme catalyses a purine 2'-deoxy-D-ribonucleoside + phosphate = a purine nucleobase + 2-deoxy-alpha-D-ribose 1-phosphate. Catalyzes the reversible phosphorolytic breakdown of the N-glycosidic bond in the beta-(deoxy)ribonucleoside molecules, with the formation of the corresponding free purine bases and pentose-1-phosphate. This chain is Purine nucleoside phosphorylase DeoD-type, found in Helicobacter acinonychis (strain Sheeba).